Reading from the N-terminus, the 1538-residue chain is Ferredoxin-dependent glutamate synthase (1538 aa).

C34 (for GATase activity) is an active-site residue. The Glutamine amidotransferase type-2 domain maps to C34 to F431. L1109–R1166 contacts FMN. [3Fe-4S] cluster contacts are provided by C1162, C1168, and C1173.

The protein belongs to the glutamate synthase family. Monomer. It depends on [3Fe-4S] cluster as a cofactor. FAD is required as a cofactor. The cofactor is FMN.

It is found in the plastid. The protein resides in the chloroplast stroma. It catalyses the reaction 2 oxidized [2Fe-2S]-[ferredoxin] + 2 L-glutamate = L-glutamine + 2 reduced [2Fe-2S]-[ferredoxin] + 2-oxoglutarate + 2 H(+). It participates in amino-acid biosynthesis; L-glutamate biosynthesis via GLT pathway; L-glutamate from 2-oxoglutarate and L-glutamine (ferredoxin route): step 1/1. Its pathway is energy metabolism; nitrogen metabolism. The sequence is that of Ferredoxin-dependent glutamate synthase (gltB) from Pyropia yezoensis (Susabi-nori).